The following is a 445-amino-acid chain: Methylenetetrahydrofolate--tRNA-(uracil-5-)-methyltransferase TrmFO (445 aa).

FAD is bound at residue glycine 9–glycine 14.

This sequence belongs to the MnmG family. TrmFO subfamily. It depends on FAD as a cofactor.

The protein resides in the cytoplasm. The catalysed reaction is uridine(54) in tRNA + (6R)-5,10-methylene-5,6,7,8-tetrahydrofolate + NADH + H(+) = 5-methyluridine(54) in tRNA + (6S)-5,6,7,8-tetrahydrofolate + NAD(+). The enzyme catalyses uridine(54) in tRNA + (6R)-5,10-methylene-5,6,7,8-tetrahydrofolate + NADPH + H(+) = 5-methyluridine(54) in tRNA + (6S)-5,6,7,8-tetrahydrofolate + NADP(+). Its function is as follows. Catalyzes the folate-dependent formation of 5-methyl-uridine at position 54 (M-5-U54) in all tRNAs. This chain is Methylenetetrahydrofolate--tRNA-(uracil-5-)-methyltransferase TrmFO, found in Aquifex aeolicus (strain VF5).